The following is an 839-amino-acid chain: Mitochondrial escape protein 2 (839 aa).

Residues 1–42 constitute a mitochondrion transit peptide; sequence MIQFSGRACLRQGWKCAAGVGLRCHGAHSSPPLHVPPFRRYT. The Mitochondrial matrix portion of the chain corresponds to 43–297; it reads ATYSRADETG…IRGWIVSHPR (255 aa). Positions 190–282 constitute an RRM domain; that stretch reads SRIKVEFLPT…TLLKLSYERK (93 aa). Residues 298–318 form a helical membrane-spanning segment; that stretch reads IVIPIIAAVIAAITVIVFDPI. The Mitochondrial intermembrane segment spans residues 319–839; that stretch reads RTFFIKIQIA…GLRRILQSKM (521 aa). Positions 769–838 form a coiled coil; sequence LRTLGQQIAM…VGLRRILQSK (70 aa).

Belongs to the YME2 family.

The protein resides in the mitochondrion inner membrane. Functionally, plays a role in maintaining the mitochondrial genome and in controlling the mtDNA escape. Involved in the regulation of mtDNA nucleotide structure and number. May have a dispensable role in early maturation of pre-rRNA. This Coccidioides immitis (strain RS) (Valley fever fungus) protein is Mitochondrial escape protein 2 (YME2).